A 125-amino-acid polypeptide reads, in one-letter code: Glutaredoxin-C1 (125 aa).

The region spanning 19–119 (VNKAKEIVSA…PLLTEAGAIA (101 aa)) is the Glutaredoxin domain. Cys-39 and Cys-42 are joined by a disulfide.

The protein belongs to the glutaredoxin family. CPYC subfamily.

It localises to the cytoplasm. Has a glutathione-disulfide oxidoreductase activity in the presence of NADPH and glutathione reductase. Reduces low molecular weight disulfides and proteins. The sequence is that of Glutaredoxin-C1 (GRXC1) from Arabidopsis thaliana (Mouse-ear cress).